An 82-amino-acid polypeptide reads, in one-letter code: Small ribosomal subunit protein bS16 (82 aa).

It belongs to the bacterial ribosomal protein bS16 family.

This chain is Small ribosomal subunit protein bS16, found in Actinobacillus succinogenes (strain ATCC 55618 / DSM 22257 / CCUG 43843 / 130Z).